The primary structure comprises 113 residues: Immunoglobulin lambda variable 2-23 (113 aa).

The first 19 residues, 1 to 19 (MAWALLLLTLLTQDTGSWA), serve as a signal peptide directing secretion. The residue at position 20 (Q20) is a Pyrrolidone carboxylic acid. The framework-1 stretch occupies residues 20-44 (QSALTQPASVSGSPGQSITISCTGT). The region spanning 20 to 113 (QSALTQPASV…EADYYCCSYA (94 aa)) is the Ig-like domain. A disulfide bridge connects residues C41 and C109. Residues 45–53 (SSDVGSYNL) are complementarity-determining-1. The segment at 54 to 70 (VSWYQQHPGKAPKLMIY) is framework-2. The segment at 71–73 (EGS) is complementarity-determining-2. A disordered region spans residues 73–92 (SKRPSGVSNRFSGSKSGNTA). The segment at 74–109 (KRPSGVSNRFSGSKSGNTASLTISGLQAEDEADYYC) is framework-3. A compositionally biased stretch (polar residues) spans 78-92 (GVSNRFSGSKSGNTA). The complementarity-determining-3 stretch occupies residues 110–113 (CSYA).

As to quaternary structure, immunoglobulins are composed of two identical heavy chains and two identical light chains; disulfide-linked.

The protein resides in the secreted. It localises to the cell membrane. In terms of biological role, v region of the variable domain of immunoglobulin light chains that participates in the antigen recognition. Immunoglobulins, also known as antibodies, are membrane-bound or secreted glycoproteins produced by B lymphocytes. In the recognition phase of humoral immunity, the membrane-bound immunoglobulins serve as receptors which, upon binding of a specific antigen, trigger the clonal expansion and differentiation of B lymphocytes into immunoglobulins-secreting plasma cells. Secreted immunoglobulins mediate the effector phase of humoral immunity, which results in the elimination of bound antigens. The antigen binding site is formed by the variable domain of one heavy chain, together with that of its associated light chain. Thus, each immunoglobulin has two antigen binding sites with remarkable affinity for a particular antigen. The variable domains are assembled by a process called V-(D)-J rearrangement and can then be subjected to somatic hypermutations which, after exposure to antigen and selection, allow affinity maturation for a particular antigen. This chain is Immunoglobulin lambda variable 2-23, found in Homo sapiens (Human).